Consider the following 189-residue polypeptide: GMP synthase [glutamine-hydrolyzing] subunit A (189 aa).

Residues 1 to 189 (MIVILNNGGQ…CKKCGFEFEE (189 aa)) form the Glutamine amidotransferase type-1 domain. The active-site Nucleophile is the cysteine 76. Catalysis depends on residues histidine 163 and glutamate 165.

Heterodimer composed of a glutamine amidotransferase subunit (A) and a GMP-binding subunit (B).

The catalysed reaction is XMP + L-glutamine + ATP + H2O = GMP + L-glutamate + AMP + diphosphate + 2 H(+). It participates in purine metabolism; GMP biosynthesis; GMP from XMP (L-Gln route): step 1/1. Functionally, catalyzes the synthesis of GMP from XMP. This is GMP synthase [glutamine-hydrolyzing] subunit A from Methanococcus maripaludis (strain C6 / ATCC BAA-1332).